We begin with the raw amino-acid sequence, 116 residues long: Small ribosomal subunit protein uS11m (116 aa).

The protein belongs to the universal ribosomal protein uS11 family.

The protein resides in the mitochondrion. The polypeptide is Small ribosomal subunit protein uS11m (RPS11) (Chondrus crispus (Carrageen Irish moss)).